The chain runs to 512 residues: Mannose-1-phosphate guanylyltransferase (512 aa).

Belongs to the mannose-6-phosphate isomerase type 2 family.

It carries out the reaction alpha-D-mannose 1-phosphate + GTP + H(+) = GDP-alpha-D-mannose + diphosphate. The protein is Mannose-1-phosphate guanylyltransferase (noeJ) of Sinorhizobium fredii (strain NBRC 101917 / NGR234).